A 360-amino-acid polypeptide reads, in one-letter code: Photosystem II protein D1 (360 aa).

3 helical membrane-spanning segments follow: residues 29–46, 118–133, and 142–156; these read YIGW…TATS, HFLL…EWEL, and WIFV…AASA. Residue His118 coordinates chlorophyll a. Tyr126 is a binding site for pheophytin a. Positions 170 and 189 each coordinate [CaMn4O5] cluster. The chain crosses the membrane as a helical span at residues 197-218; sequence FHMAGVAGVFGGSLFSAMHGSL. Position 198 (His198) interacts with chlorophyll a. A quinone-binding positions include His215 and 264–265; that span reads SF. His215 contributes to the Fe cation binding site. Position 272 (His272) interacts with Fe cation. Residues 274-288 form a helical membrane-spanning segment; sequence FLAAWPVVGIWLTAL. [CaMn4O5] cluster contacts are provided by His332, Glu333, Asp342, and Ala344. Residues 345–360 constitute a propeptide that is removed on maturation; it reads SNEVLPVAVNAPAVNG.

The protein belongs to the reaction center PufL/M/PsbA/D family. In terms of assembly, PSII is composed of 1 copy each of membrane proteins PsbA, PsbB, PsbC, PsbD, PsbE, PsbF, PsbH, PsbI, PsbJ, PsbK, PsbL, PsbM, PsbT, PsbX, PsbY, PsbZ, Psb30/Ycf12, at least 3 peripheral proteins of the oxygen-evolving complex and a large number of cofactors. It forms dimeric complexes. The D1/D2 heterodimer binds P680, chlorophylls that are the primary electron donor of PSII, and subsequent electron acceptors. It shares a non-heme iron and each subunit binds pheophytin, quinone, additional chlorophylls, carotenoids and lipids. D1 provides most of the ligands for the Mn4-Ca-O5 cluster of the oxygen-evolving complex (OEC). There is also a Cl(-1) ion associated with D1 and D2, which is required for oxygen evolution. The PSII complex binds additional chlorophylls, carotenoids and specific lipids. serves as cofactor. In terms of processing, tyr-161 forms a radical intermediate that is referred to as redox-active TyrZ, YZ or Y-Z. Post-translationally, C-terminally processed by CTPA; processing is essential to allow assembly of the oxygen-evolving complex and thus photosynthetic growth.

The protein localises to the plastid. Its subcellular location is the chloroplast thylakoid membrane. The enzyme catalyses 2 a plastoquinone + 4 hnu + 2 H2O = 2 a plastoquinol + O2. Photosystem II (PSII) is a light-driven water:plastoquinone oxidoreductase that uses light energy to abstract electrons from H(2)O, generating O(2) and a proton gradient subsequently used for ATP formation. It consists of a core antenna complex that captures photons, and an electron transfer chain that converts photonic excitation into a charge separation. The D1/D2 (PsbA/PsbD) reaction center heterodimer binds P680, the primary electron donor of PSII as well as several subsequent electron acceptors. The chain is Photosystem II protein D1 from Heterosigma akashiwo (Chromophytic alga).